The chain runs to 369 residues: MEITNVNEYEAIAKQKLPKMVYDYYASGAEDQWTLAENRNAFSRILFRPRILIDVTNIDMTTTILGFKISMPIMIAPTAMQKMAHPEGEYATARAASAAGTIMTLSSWATSSVEEVASTGPGIRFFQLYVYKDRNVVAQLVRRAERAGFKAIALTVDTPRLGRREADIKNRFVLPPFLTLKNFEGIDLGKMDKANDSGLSSYVAGQIDRSLSWKDVAWLQTITSLPILVKGVITAEDARLAVQHGAAGIIVSNHGARQLDYVPATIMALEEVVKAAQGRIPVFLDGGVRRGTDVFKALALGAAGVFIGRPVVFSLAAEGEAGVKKVLQMMRDEFELTMALSGCRSLKEISRSHIAADWDGPSSRAVARL.

An N-acetylmethionine modification is found at methionine 1. In terms of domain architecture, FMN hydroxy acid dehydrogenase spans 1–359; it reads MEITNVNEYE…SRSHIAADWD (359 aa). Position 24 (tyrosine 24) interacts with glyoxylate. FMN contacts are provided by residues 77-79, serine 106, 127-129, and threonine 155; these read PTA and QLY. A glyoxylate-binding site is contributed by tyrosine 129. Arginine 164 contacts glyoxylate. FMN-binding residues include lysine 230 and serine 252. 2 residues coordinate glyoxylate: histidine 254 and arginine 257. The Proton acceptor role is filled by histidine 254. Residues 285-289 and 308-309 contribute to the FMN site; these read DGGVR and GR. The Microbody targeting signal signature appears at 367–369; the sequence is ARL.

The protein belongs to the FMN-dependent alpha-hydroxy acid dehydrogenase family. In terms of assembly, homotetramer. FMN serves as cofactor.

Its subcellular location is the peroxisome. It carries out the reaction glycolate + O2 = glyoxylate + H2O2. It catalyses the reaction a (2S)-2-hydroxycarboxylate + O2 = a 2-oxocarboxylate + H2O2. It functions in the pathway photosynthesis; photorespiration; glycine from 2-phosphoglycolate: step 2/3. In terms of biological role, catalyzes the oxidation of glycolate to glyoxylate, with a reduction of O2 to H2O2. Is a key enzyme in photorespiration in green plants. To a lesser extent, is also able to use L-lactate and 2-hydroxbyutanoate as substrate in vitro, but shows almost no activity with L-mandelate. This chain is Glycolate oxidase, found in Spinacia oleracea (Spinach).